Here is a 167-residue protein sequence, read N- to C-terminus: Adenylylsulfate reductase subunit beta (167 aa).

2 4Fe-4S ferredoxin-type domains span residues 1–35 (MPTF…LDPE) and 38–67 (KAFN…ARPY). The [4Fe-4S] cluster site is built by Cys10, Cys13, Cys21, Cys25, Cys47, Cys50, Cys53, and Cys57.

As to quaternary structure, heterodimer composed of AprA and AprB. The heterodimers can dimerize to form heterotetramers. [4Fe-4S] cluster is required as a cofactor.

It localises to the cytoplasm. Its function is as follows. Iron-sulfur cluster subunit of the adenylylsulfate reductase which catalyzes reversibly the reduction of adenosine 5'-phosphosulfate (APS) to sulfite and AMP during dissimilatory sulfate reduction. The iron-sulfur cluster 2 is thought to accept electrons from a still unknown electron donor and transfer electrons to the iron-sulfur cluster 1 of this protein and then onto the FAD of AprA. The polypeptide is Adenylylsulfate reductase subunit beta (Megalodesulfovibrio gigas (strain ATCC 19364 / DSM 1382 / NCIMB 9332 / VKM B-1759) (Desulfovibrio gigas)).